We begin with the raw amino-acid sequence, 293 residues long: Pyridoxal 5'-phosphate synthase subunit PdxS (293 aa).

Position 23 (Asp23) interacts with D-ribose 5-phosphate. The Schiff-base intermediate with D-ribose 5-phosphate role is filled by Lys80. A D-ribose 5-phosphate-binding site is contributed by Gly152. Arg164 contributes to the D-glyceraldehyde 3-phosphate binding site. D-ribose 5-phosphate contacts are provided by residues Gly213 and 234-235; that span reads GS.

This sequence belongs to the PdxS/SNZ family. As to quaternary structure, in the presence of PdxT, forms a dodecamer of heterodimers.

It carries out the reaction aldehydo-D-ribose 5-phosphate + D-glyceraldehyde 3-phosphate + L-glutamine = pyridoxal 5'-phosphate + L-glutamate + phosphate + 3 H2O + H(+). Its pathway is cofactor biosynthesis; pyridoxal 5'-phosphate biosynthesis. Catalyzes the formation of pyridoxal 5'-phosphate from ribose 5-phosphate (RBP), glyceraldehyde 3-phosphate (G3P) and ammonia. The ammonia is provided by the PdxT subunit. Can also use ribulose 5-phosphate and dihydroxyacetone phosphate as substrates, resulting from enzyme-catalyzed isomerization of RBP and G3P, respectively. This chain is Pyridoxal 5'-phosphate synthase subunit PdxS, found in Methanothermobacter thermautotrophicus (strain ATCC 29096 / DSM 1053 / JCM 10044 / NBRC 100330 / Delta H) (Methanobacterium thermoautotrophicum).